A 779-amino-acid polypeptide reads, in one-letter code: uncharacterized protein (779 aa).

Cys-72 and Cys-75 together coordinate [4Fe-4S] cluster.

Belongs to the prokaryotic molybdopterin-containing oxidoreductase family. [4Fe-4S] cluster is required as a cofactor. Mo-bis(molybdopterin guanine dinucleotide) serves as cofactor.

This is an uncharacterized protein from Mycobacterium bovis (strain ATCC BAA-935 / AF2122/97).